The sequence spans 455 residues: Phosphoglucosamine mutase (455 aa).

Residue Ser-103 is the Phosphoserine intermediate of the active site. The Mg(2+) site is built by Ser-103, Asp-243, Asp-245, and Asp-247. A Phosphoserine modification is found at Ser-103.

Belongs to the phosphohexose mutase family. The cofactor is Mg(2+). Activated by phosphorylation.

It carries out the reaction alpha-D-glucosamine 1-phosphate = D-glucosamine 6-phosphate. Catalyzes the conversion of glucosamine-6-phosphate to glucosamine-1-phosphate. This is Phosphoglucosamine mutase from Halorhodospira halophila (strain DSM 244 / SL1) (Ectothiorhodospira halophila (strain DSM 244 / SL1)).